The sequence spans 877 residues: Polycomb protein Scm (877 aa).

A disordered region spans residues 1 to 57; it reads MSGGRDSSTSSGSNSAAPGASTNATSSASASASSTSTSASPGSTTSPASTQRQRGRP. Residues 7–50 show a composition bias toward low complexity; that stretch reads SSTSSGSNSAAPGASTNATSSASASASSTSTSASPGSTTSPAST. The FCS-type zinc finger occupies 54-93; it reads RGRPAKRATCTWCGEGKLPLQYVLPTQTGKKEFCSETCIA. Zn(2+) contacts are provided by Cys63, Cys66, Cys87, and Cys91. MBT repeat units lie at residues 175 to 273 and 281 to 382; these read FDWD…LQPP and SSWP…MQPP. 3 disordered regions span residues 535 to 621, 652 to 692, and 713 to 735; these read NSRK…SNKV, TNTN…GGSA, and ANVK…ASLP. A Phosphothreonine modification is found at Thr546. 2 positions are modified to phosphoserine: Ser549 and Ser550. A compositionally biased stretch (polar residues) spans 560 to 569; it reads QSNSATTSPS. Ser585 is subject to Phosphoserine. Residues 598–620 are compositionally biased toward low complexity; that stretch reads ASQQNSNHSLNNNNNSASKSSNK. The span at 724-735 shows a compositional bias: low complexity; the sequence is SPTTLSSSASLP. An SAM domain is found at 806 to 876; the sequence is WTIEEVIQYI…KVNGRRNNLA (71 aa).

Belongs to the SCM family. Scm associates with the PRC1 core complex containing PSC, PC, PH and Sce/RING1. Forms homotypic and heterotypic interactions. Interacts with the SAM domain of ph-p via its SAM domain in vitro. Interacts with corto in vitro.

The protein localises to the nucleus. In terms of biological role, polycomb group (PcG) protein. PcG proteins act by forming multiprotein complexes, which are required to maintain the transcriptionally repressive state of homeotic genes throughout development. PcG proteins are not required to initiate repression, but to maintain it during later stages of development. They probably act via the methylation of histones, rendering chromatin heritably changed in its expressibility. This is Polycomb protein Scm from Drosophila melanogaster (Fruit fly).